A 524-amino-acid polypeptide reads, in one-letter code: Excitatory amino acid transporter 3 (524 aa).

The Cytoplasmic segment spans residues 1–18; it reads MGKPARKGCEWKRFLKNN. The helical transmembrane segment at 19-38 threads the bilayer; that stretch reads WVLLSTVAAVVLGITTGVLV. Over 39 to 61 the chain is Extracellular; that stretch reads REHSNLSTLEKFYFAFPGEILMR. An N-linked (GlcNAc...) asparagine glycan is attached at Asn-43. The helical transmembrane segment at 62 to 82 threads the bilayer; it reads MLKLIILPLIISSMITGVAAL. Topologically, residues 83-93 are cytoplasmic; the sequence is DSNVSGKIGLR. Residues 94 to 114 traverse the membrane as a helical segment; it reads AVVYYFCTTLIAVILGIVLVV. Residues Tyr-98, Thr-101, and Thr-102 each contribute to the Na(+) site. Over 115-205 the chain is Extracellular; that stretch reads SIKPGVTQKV…KTKEYKIVGM (91 aa). Residues Asn-178 and Asn-195 are each glycosylated (N-linked (GlcNAc...) asparagine). The chain crosses the membrane as a helical span at residues 206–229; that stretch reads YSDGINVLGLIVFCLVFGLVIGKM. The Cytoplasmic segment spans residues 230–238; the sequence is GEKGQILVD. A helical membrane pass occupies residues 239–266; that stretch reads FFNALSDATMKIVQIIMCYMPLGILFLI. Topologically, residues 267–286 are extracellular; the sequence is AGKIIEVEDWEIFRKLGLYM. Residues 287–308 traverse the membrane as a helical segment; the sequence is ATVLTGLAIHSIVILPLIYFIV. Residues 309 to 313 lie on the Cytoplasmic side of the membrane; the sequence is VRKNP. Positions 314-344 form an intramembrane region, discontinuously helical; it reads FRFAMGMAQALLTALMISSSSATLPVTFRCA. L-aspartate-binding residues include Ser-331 and Ser-333. Over 345 to 353 the chain is Cytoplasmic; the sequence is EENNQVDKR. A helical transmembrane segment spans residues 354–380; it reads ITRFVLPVGATINMDGTALYEAVAAVF. Residues Gly-362, Thr-364, Asn-366, and Asp-368 each coordinate Na(+). Thr-370 contributes to the L-aspartate binding site. Residues 381–393 are Extracellular-facing; sequence IAQLNDLDLGIGQ. Positions 394 to 427 form an intramembrane region, discontinuously helical; sequence IITISITATSASIGAAGVPQAGLVTMVIVLSAVG. Positions 405, 406, and 408 each coordinate Na(+). Val-411 provides a ligand contact to L-aspartate. Residues 428–440 lie on the Extracellular side of the membrane; sequence LPAEDVTLIIAVD. Residues 441–462 form a helical membrane-spanning segment; that stretch reads WLLDRFRTMVNVLGDAFGTGIV. L-aspartate is bound by residues Arg-447, Thr-448, and Asn-451. Residues Asn-451 and Asp-455 each contribute to the Na(+) site. Residues 463 to 524 lie on the Cytoplasmic side of the membrane; the sequence is EKLSKKELEQ…TISFTQTSQF (62 aa). Residues Ser-517 and Ser-522 each carry the phosphoserine modification.

Belongs to the dicarboxylate/amino acid:cation symporter (DAACS) (TC 2.A.23) family. SLC1A1 subfamily. In terms of assembly, homotrimer. Interacts with ARL6IP5. Interacts with RTN2 (via N-terminus); the interaction promotes cell surface expression of SLC1A1. Interacts with SORCS2; this interaction is important for normal expression at the cell membrane. Post-translationally, glycosylated. As to expression, expressed in all tissues tested including liver, muscle, testis, ovary, retinoblastoma cell line, neurons and brain (in which there was dense expression in substantia nigra, red nucleus, hippocampus and in cerebral cortical layers).

It localises to the cell membrane. The protein resides in the apical cell membrane. The protein localises to the synapse. Its subcellular location is the synaptosome. It is found in the early endosome membrane. It localises to the late endosome membrane. The protein resides in the recycling endosome membrane. It carries out the reaction K(+)(in) + L-glutamate(out) + 3 Na(+)(out) + H(+)(out) = K(+)(out) + L-glutamate(in) + 3 Na(+)(in) + H(+)(in). It catalyses the reaction K(+)(in) + L-aspartate(out) + 3 Na(+)(out) + H(+)(out) = K(+)(out) + L-aspartate(in) + 3 Na(+)(in) + H(+)(in). The catalysed reaction is D-aspartate(out) + K(+)(in) + 3 Na(+)(out) + H(+)(out) = D-aspartate(in) + K(+)(out) + 3 Na(+)(in) + H(+)(in). The enzyme catalyses K(+)(in) + L-cysteine(out) + 3 Na(+)(out) + H(+)(out) = K(+)(out) + L-cysteine(in) + 3 Na(+)(in) + H(+)(in). Functionally, sodium-dependent, high-affinity amino acid transporter that mediates the uptake of L-glutamate and also L-aspartate and D-aspartate. Can also transport L-cysteine. Functions as a symporter that transports one amino acid molecule together with two or three Na(+) ions and one proton, in parallel with the counter-transport of one K(+) ion. Mediates Cl(-) flux that is not coupled to amino acid transport; this avoids the accumulation of negative charges due to aspartate and Na(+) symport. Plays an important role in L-glutamate and L-aspartate reabsorption in renal tubuli. Plays a redundant role in the rapid removal of released glutamate from the synaptic cleft, which is essential for terminating the postsynaptic action of glutamate. Contributes to glutathione biosynthesis and protection against oxidative stress via its role in L-glutamate and L-cysteine transport. Negatively regulated by ARL6IP5. This Homo sapiens (Human) protein is Excitatory amino acid transporter 3.